A 345-amino-acid polypeptide reads, in one-letter code: S-adenosylmethionine:tRNA ribosyltransferase-isomerase (345 aa).

Belongs to the QueA family. As to quaternary structure, monomer.

It is found in the cytoplasm. It carries out the reaction 7-aminomethyl-7-carbaguanosine(34) in tRNA + S-adenosyl-L-methionine = epoxyqueuosine(34) in tRNA + adenine + L-methionine + 2 H(+). It functions in the pathway tRNA modification; tRNA-queuosine biosynthesis. Its function is as follows. Transfers and isomerizes the ribose moiety from AdoMet to the 7-aminomethyl group of 7-deazaguanine (preQ1-tRNA) to give epoxyqueuosine (oQ-tRNA). The chain is S-adenosylmethionine:tRNA ribosyltransferase-isomerase from Helicobacter pylori (strain J99 / ATCC 700824) (Campylobacter pylori J99).